A 698-amino-acid polypeptide reads, in one-letter code: Probable xyloglucan glycosyltransferase 2 (698 aa).

The next 2 membrane-spanning stretches (helical) occupy residues 124 to 144 (GFLALSLLALAVELAAYWNGW) and 190 to 210 (ILLFVIQSMDRLVLCLGCFWI). The active site involves D272. Residues D331 and D333 each contribute to the substrate site. D425 is an active-site residue. 4 helical membrane-spanning segments follow: residues 503–523 (LILPFYSFTLFCVILPLTMFV), 528–548 (LPVWVICYVPVCMSFLNILPS), 653–668 (LALSLLLLTAATRSLL), and 673–693 (IHFYFLLFQGVSFLFVGLDLI).

This sequence belongs to the glycosyltransferase 2 family. Plant cellulose synthase-like C subfamily.

It localises to the golgi apparatus membrane. Its function is as follows. Probable beta-1,4-glucan synthase rather involved in the synthesis of the xyloglucan backbone than cellulose. Seems to work simultaneously with xyloglucan 6-xylosyltransferase. Xyloglucan is a noncellulosic polysaccharides of plant cell wall and consists of a glucan backbone substituted by xylose, galactose and fucose. In Oryza sativa subsp. indica (Rice), this protein is Probable xyloglucan glycosyltransferase 2 (CSLC2).